The sequence spans 291 residues: Flavin-dependent thymidylate synthase (291 aa).

In terms of domain architecture, ThyX spans 31–241 (GFVRVVDYMG…PMVHAAFVEY (211 aa)). FAD is bound by residues serine 77, 100–102 (RHR), and glutamate 108. DUMP contacts are provided by residues 97–100 (QWVR), 108–112 (EYSAR), and arginine 180. Residues 100 to 110 (RHRTASINEYS) carry the ThyX motif motif. An FAD-binding site is contributed by 196-198 (NLH). Arginine 207 lines the dUMP pocket. Residue arginine 207 is the Involved in ionization of N3 of dUMP, leading to its activation of the active site.

This sequence belongs to the thymidylate synthase ThyX family. As to quaternary structure, homotetramer. Requires FAD as cofactor.

The catalysed reaction is dUMP + (6R)-5,10-methylene-5,6,7,8-tetrahydrofolate + NADPH + H(+) = dTMP + (6S)-5,6,7,8-tetrahydrofolate + NADP(+). Its pathway is pyrimidine metabolism; dTTP biosynthesis. Functionally, catalyzes the reductive methylation of 2'-deoxyuridine-5'-monophosphate (dUMP) to 2'-deoxythymidine-5'-monophosphate (dTMP) while utilizing 5,10-methylenetetrahydrofolate (mTHF) as the methyl donor, and NADPH and FADH(2) as the reductant. The protein is Flavin-dependent thymidylate synthase of Anaplasma marginale (strain St. Maries).